A 612-amino-acid polypeptide reads, in one-letter code: UvrABC system protein C (612 aa).

The 80-residue stretch at Thr-11–Ile-90 folds into the GIY-YIG domain. In terms of domain architecture, UVR spans Ser-200 to Thr-235.

The protein belongs to the UvrC family. Interacts with UvrB in an incision complex.

The protein resides in the cytoplasm. Functionally, the UvrABC repair system catalyzes the recognition and processing of DNA lesions. UvrC both incises the 5' and 3' sides of the lesion. The N-terminal half is responsible for the 3' incision and the C-terminal half is responsible for the 5' incision. The sequence is that of UvrABC system protein C from Syntrophotalea carbinolica (strain DSM 2380 / NBRC 103641 / GraBd1) (Pelobacter carbinolicus).